A 761-amino-acid polypeptide reads, in one-letter code: Membrane protein of ER body-like protein (761 aa).

2 disordered regions span residues 1–85 and 120–162; these read MGSA…GEHT and GSES…RSRE. Over residues 22 to 31 the composition is skewed to acidic residues; that stretch reads EVEEDDEQIV. Residues 48–65 are compositionally biased toward low complexity; it reads VDSSTITNTSSSSSSSFS. Positions 74 to 85 are enriched in basic and acidic residues; that stretch reads PDFHSNGDGEHT. The segment covering 136–154 has biased composition (polar residues); that stretch reads TADLNGEQTQLEPENGSTS. Residues 186–206 adopt a coiled-coil conformation; sequence IEEEVDFEDVEYHDVENMMDK. Disordered regions lie at residues 338–374 and 416–448; these read SSSV…TGSA and QTQQ…PSHG. Residues 416–432 show a composition bias toward polar residues; it reads QTQQKIDNDDSSTADGN. 5 consecutive transmembrane segments (helical) span residues 549–569, 573–593, 640–660, 670–690, and 702–722; these read IVYG…SAAG, SMLN…ILII, VAIL…YFSF, VASV…AKAH, and ILYY…VGNF.

It belongs to the CCC1 family.

The protein resides in the endoplasmic reticulum membrane. In terms of biological role, not essential for the accumulation of ER body components, including PYK10. This Arabidopsis thaliana (Mouse-ear cress) protein is Membrane protein of ER body-like protein (MEBL).